The following is a 791-amino-acid chain: Putative inactive tyrosine-protein kinase Wsck (791 aa).

A signal peptide spans 1-26; it reads MECGSHSGHRPIPIWLSSCLVAMCLG. The Extracellular portion of the chain corresponds to 27 to 401; it reads LPLGAAVPQE…YATFEKGQSS (375 aa). In terms of domain architecture, WSC spans 39–125; the sequence is AYYYVGCYTA…VGVHSYYSTI (87 aa). The Fibronectin type-III domain maps to 131-246; that stretch reads GPHHLRISNK…ASIEATTEVG (116 aa). N-linked (GlcNAc...) asparagine glycosylation is found at asparagine 139, asparagine 217, and asparagine 329. Residues 402-422 traverse the membrane as a helical segment; it reads VVALAVTCVIFGSCLLLSLIA. Topologically, residues 423–791 are cytoplasmic; that stretch reads YFYLRYKTCR…PQLEAVATMG (369 aa). The 266-residue stretch at 493-758 folds into the Protein kinase domain; sequence LNVNDVIGDG…DVAFGVRQLM (266 aa). 499–507 lines the ATP pocket; the sequence is IGDGRFGEI.

Belongs to the protein kinase superfamily. Tyr protein kinase family.

The protein resides in the membrane. Its function is as follows. Probably lacks tyrosine-protein kinase activity. The protein is Putative inactive tyrosine-protein kinase Wsck of Drosophila melanogaster (Fruit fly).